The chain runs to 1530 residues: Synaptonemal complex protein 2 (1530 aa).

Basic and acidic residues predominate over residues 439–461; the sequence is EKSKSPKEFAKPSKYIKNSDKGN. The tract at residues 439–480 is disordered; sequence EKSKSPKEFAKPSKYIKNSDKGNRNNSQLEKTTPSKRKMSEA. A phosphoserine mark is found at serine 457 and serine 465. Phosphothreonine is present on threonine 471. Phosphoserine is present on residues serine 494, serine 519, serine 529, and serine 538. Positions 496-555 are disordered; sequence VLFSNTSIPPRRRRIKPPLQMTSSAEKPSVSQTSENRVDNAASLKSRSSEGRHRRDNIDK. Over residues 515 to 530 the composition is skewed to polar residues; that stretch reads QMTSSAEKPSVSQTSE. Over residues 542-555 the composition is skewed to basic and acidic residues; the sequence is RSSEGRHRRDNIDK. Position 619 is a phosphothreonine (threonine 619). Disordered regions lie at residues 653–676, 693–717, and 755–795; these read QKSS…KKEQ, HNQQ…SDWP, and DKNP…SKGK. Phosphoserine is present on residues serine 660 and serine 664. Composition is skewed to polar residues over residues 695-713 and 755-764; these read QQQN…NAKQ and DKNPSASKNV. Phosphoserine is present on serine 936. A Phosphothreonine modification is found at threonine 938. The segment at 962 to 1003 is disordered; sequence QLIDYSRNKNVKNHKSGKSRSSLEKGQPSSKMTPSKNITKKM. Residues 970-979 are compositionally biased toward basic residues; it reads KNVKNHKSGK. Residues 988 to 998 are compositionally biased toward polar residues; sequence QPSSKMTPSKN. 5 positions are modified to phosphoserine: serine 1136, serine 1138, serine 1145, serine 1161, and serine 1177. Threonine 1189 is subject to Phosphothreonine. 5 positions are modified to phosphoserine: serine 1204, serine 1234, serine 1253, serine 1295, and serine 1297. The residue at position 1339 (threonine 1339) is a Phosphothreonine.

It belongs to the SYCP2 family. In terms of assembly, component of the lateral elements of synaptonemal complexes. Heterodimer with SYCP3. Interacts with SMC1A and SMC3. Interacts with TEX11. In terms of processing, phosphorylated.

Its subcellular location is the nucleus. The protein localises to the chromosome. In terms of biological role, major component of the axial/lateral elements of synaptonemal complexes (SCS) during meiotic prophase. Plays a role in the assembly of synaptonemal complexes. Required for normal meiotic chromosome synapsis during oocyte and spermatocyte development and for normal male and female fertility. Required for insertion of SYCP3 into synaptonemal complexes. May be involved in the organization of chromatin by temporarily binding to DNA scaffold attachment regions. Requires SYCP3, but not SYCP1, in order to be incorporated into the axial/lateral elements. This chain is Synaptonemal complex protein 2 (SYCP2), found in Homo sapiens (Human).